The following is a 490-amino-acid chain: ATP-dependent 6-phosphofructokinase (490 aa).

ATP contacts are provided by residues G109, 175–176 (RG), and 200–203 (GDGT). Residue D201 coordinates Mg(2+). Substrate contacts are provided by residues 229–231 (TID), 274–276 (MGR), E327, and 383–386 (YMIR). Catalysis depends on D231, which acts as the Proton acceptor. The short motif at 488–490 (SKL) is the Peroxisomal targeting signal element.

This sequence belongs to the phosphofructokinase type A (PFKA) family. PPi-dependent PFK group II subfamily. Atypical ATP-dependent clade 'X' sub-subfamily. Homotetramer. Requires Mg(2+) as cofactor.

Its subcellular location is the glycosome. The catalysed reaction is beta-D-fructose 6-phosphate + ATP = beta-D-fructose 1,6-bisphosphate + ADP + H(+). It participates in carbohydrate degradation; glycolysis; D-glyceraldehyde 3-phosphate and glycerone phosphate from D-glucose: step 3/4. Its activity is regulated as follows. Allosterically activated by AMP. Its function is as follows. Catalyzes the phosphorylation of D-fructose 6-phosphate to fructose 1,6-bisphosphate by ATP, the first committing step of glycolysis. In Trypanoplasma borreli, this protein is ATP-dependent 6-phosphofructokinase.